The chain runs to 442 residues: UDP-N-acetylmuramoylalanine--D-glutamate ligase (442 aa).

It belongs to the MurCDEF family.

Its subcellular location is the cytoplasm. It carries out the reaction UDP-N-acetyl-alpha-D-muramoyl-L-alanine + D-glutamate + ATP = UDP-N-acetyl-alpha-D-muramoyl-L-alanyl-D-glutamate + ADP + phosphate + H(+). Its pathway is cell wall biogenesis; peptidoglycan biosynthesis. Its function is as follows. Cell wall formation. Catalyzes the addition of glutamate to the nucleotide precursor UDP-N-acetylmuramoyl-L-alanine (UMA). In Buchnera aphidicola subsp. Baizongia pistaciae (strain Bp), this protein is UDP-N-acetylmuramoylalanine--D-glutamate ligase.